Reading from the N-terminus, the 56-residue chain is Large ribosomal subunit protein bL32 (56 aa).

Residues 1-16 (MAVQKSKKSRSRRGMR) show a composition bias toward basic residues. The segment at 1–38 (MAVQKSKKSRSRRGMRRSHDAVTPENLSVDPVSGETHR) is disordered.

The protein belongs to the bacterial ribosomal protein bL32 family.

This chain is Large ribosomal subunit protein bL32, found in Colwellia psychrerythraea (strain 34H / ATCC BAA-681) (Vibrio psychroerythus).